Reading from the N-terminus, the 719-residue chain is Polyribonucleotide nucleotidyltransferase (719 aa).

Positions 490 and 496 each coordinate Mg(2+). The 63-residue stretch at 557 to 619 folds into the KH domain; it reads PKIEIIIIPK…KSIDAALTRI (63 aa). Positions 629 to 699 constitute an S1 motif domain; it reads GEIYEGKIRS…KTGKFKLSHK (71 aa).

This sequence belongs to the polyribonucleotide nucleotidyltransferase family. It depends on Mg(2+) as a cofactor.

The protein resides in the cytoplasm. It catalyses the reaction RNA(n+1) + phosphate = RNA(n) + a ribonucleoside 5'-diphosphate. Its function is as follows. Involved in mRNA degradation. Catalyzes the phosphorolysis of single-stranded polyribonucleotides processively in the 3'- to 5'-direction. In Azobacteroides pseudotrichonymphae genomovar. CFP2, this protein is Polyribonucleotide nucleotidyltransferase.